Reading from the N-terminus, the 51-residue chain is Large ribosomal subunit protein eL39 (51 aa).

It belongs to the eukaryotic ribosomal protein eL39 family. As to quaternary structure, interacts with YIH1.

The protein is Large ribosomal subunit protein eL39 (RPL39) of Kluyveromyces lactis (strain ATCC 8585 / CBS 2359 / DSM 70799 / NBRC 1267 / NRRL Y-1140 / WM37) (Yeast).